The chain runs to 462 residues: Hydroxymethylglutaryl-CoA synthase (462 aa).

The active-site Proton donor/acceptor is the glutamate 86. Catalysis depends on cysteine 120, which acts as the Acyl-thioester intermediate. Cysteine 120, threonine 211, histidine 261, lysine 270, asparagine 338, and serine 372 together coordinate (3S)-3-hydroxy-3-methylglutaryl-CoA. The active-site Proton donor/acceptor is the histidine 261.

It belongs to the thiolase-like superfamily. HMG-CoA synthase family.

It catalyses the reaction acetoacetyl-CoA + acetyl-CoA + H2O = (3S)-3-hydroxy-3-methylglutaryl-CoA + CoA + H(+). It participates in siderophore biosynthesis. Its function is as follows. Hydroxymethylglutaryl-CoA synthase involved in the biosynthesis of siderophore ferrichrome A which is contributing to organismal virulence. The first step of ferrichrome A biosynthesis is performed by the HMG-CoA synthase hcs1 which catalyzes the generation of HMG-CoA and CoA using acetoacetyl-CoA and acetyl-CoA as substrates. The enoyl-CoA isomerase/hydratase fer4 then catalyzes the conversion of hcs1-produced HMG-CoA to methylglutaconyl-CoA. The acyltransferase fer5 then fuses the fer4-generated methylglutaconyl-CoA with sid1-generated hydroxyornithine to yield methylglutaconyl hydroxyornithine. Methylglutaconyl hydroxyornithine is then available for use by the NRPS fer3 to generate ferrichrome A. This chain is Hydroxymethylglutaryl-CoA synthase, found in Mycosarcoma maydis (Corn smut fungus).